Here is a 310-residue protein sequence, read N- to C-terminus: Homoserine kinase (310 aa).

91-101 (PIGSGLGSSAC) serves as a coordination point for ATP.

Belongs to the GHMP kinase family. Homoserine kinase subfamily.

It localises to the cytoplasm. It catalyses the reaction L-homoserine + ATP = O-phospho-L-homoserine + ADP + H(+). It participates in amino-acid biosynthesis; L-threonine biosynthesis; L-threonine from L-aspartate: step 4/5. Functionally, catalyzes the ATP-dependent phosphorylation of L-homoserine to L-homoserine phosphate. The protein is Homoserine kinase of Escherichia coli O157:H7.